The chain runs to 608 residues: Amino-acid acetyltransferase, mitochondrial (608 aa).

The 203-residue stretch at 402–604 folds into the N-acetyltransferase domain; the sequence is LNLITEHEKG…DICTRIEPSL (203 aa).

Belongs to the acetyltransferase family.

The protein resides in the mitochondrion. It carries out the reaction L-glutamate + acetyl-CoA = N-acetyl-L-glutamate + CoA + H(+). It functions in the pathway amino-acid biosynthesis; L-arginine biosynthesis; N(2)-acetyl-L-ornithine from L-glutamate: step 1/4. In terms of biological role, N-acetylglutamate synthase involved in arginine biosynthesis. This Yarrowia lipolytica (strain CLIB 122 / E 150) (Yeast) protein is Amino-acid acetyltransferase, mitochondrial (ARG2).